Here is a 147-residue protein sequence, read N- to C-terminus: Prefoldin subunit alpha (147 aa).

Belongs to the prefoldin alpha subunit family. As to quaternary structure, heterohexamer of two alpha and four beta subunits.

Its subcellular location is the cytoplasm. In terms of biological role, molecular chaperone capable of stabilizing a range of proteins. Seems to fulfill an ATP-independent, HSP70-like function in archaeal de novo protein folding. This is Prefoldin subunit alpha from Thermococcus onnurineus (strain NA1).